The chain runs to 180 residues: Large ribosomal subunit protein uL5c (180 aa).

It belongs to the universal ribosomal protein uL5 family. In terms of assembly, part of the 50S ribosomal subunit; contacts the 5S rRNA.

Its subcellular location is the plastid. The protein localises to the chloroplast. Binds 5S rRNA, forms part of the central protuberance of the 50S subunit. This chain is Large ribosomal subunit protein uL5c (rpl5), found in Tetradesmus obliquus (Green alga).